The sequence spans 541 residues: Chaperonin GroEL 1 (541 aa).

Residues 29–32 (TIGP), 86–90 (DGTTT), Gly415, 479–481 (NAA), and Asp495 each bind ATP.

It belongs to the chaperonin (HSP60) family. In terms of assembly, forms a cylinder of 14 subunits composed of two heptameric rings stacked back-to-back. Interacts with the co-chaperonin GroES.

It localises to the cytoplasm. It carries out the reaction ATP + H2O + a folded polypeptide = ADP + phosphate + an unfolded polypeptide.. Its function is as follows. Together with its co-chaperonin GroES, plays an essential role in assisting protein folding. The GroEL-GroES system forms a nano-cage that allows encapsulation of the non-native substrate proteins and provides a physical environment optimized to promote and accelerate protein folding. The protein is Chaperonin GroEL 1 of Streptomyces coelicolor (strain ATCC BAA-471 / A3(2) / M145).